A 457-amino-acid polypeptide reads, in one-letter code: Argininosuccinate lyase (457 aa).

Belongs to the lyase 1 family. Argininosuccinate lyase subfamily.

Its subcellular location is the cytoplasm. It catalyses the reaction 2-(N(omega)-L-arginino)succinate = fumarate + L-arginine. It participates in amino-acid biosynthesis; L-arginine biosynthesis; L-arginine from L-ornithine and carbamoyl phosphate: step 3/3. This is Argininosuccinate lyase from Exiguobacterium sibiricum (strain DSM 17290 / CCUG 55495 / CIP 109462 / JCM 13490 / 255-15).